Consider the following 72-residue polypeptide: Cytochrome b-c1 complex subunit 8 (72 aa).

Over 2 to 41 (GKQPVKLKAVVYAISPFQQKIMPGLWKDLPGKIHHKVSEN) the chain is Mitochondrial matrix. The chain crosses the membrane as a helical span at residues 42–59 (WISATLLLGPLVGTYSYV). Topologically, residues 60–72 (QHFLEKEKLEHRY) are mitochondrial intermembrane.

This sequence belongs to the UQCRQ/QCR8 family. In terms of assembly, component of the ubiquinol-cytochrome c oxidoreductase (cytochrome b-c1 complex, complex III, CIII), a multisubunit enzyme composed of 3 respiratory subunits cytochrome b, cytochrome c1 and Rieske protein, 2 core protein subunits, and additional low-molecular weight protein subunits. The complex exists as an obligatory dimer and forms supercomplexes (SCs) in the inner mitochondrial membrane with cytochrome c oxidase (complex IV, CIV).

The protein resides in the mitochondrion inner membrane. In terms of biological role, component of the ubiquinol-cytochrome c oxidoreductase, a multisubunit transmembrane complex that is part of the mitochondrial electron transport chain which drives oxidative phosphorylation. The respiratory chain contains 3 multisubunit complexes succinate dehydrogenase (complex II, CII), ubiquinol-cytochrome c oxidoreductase (cytochrome b-c1 complex, complex III, CIII) and cytochrome c oxidase (complex IV, CIV), that cooperate to transfer electrons derived from NADH and succinate to molecular oxygen, creating an electrochemical gradient over the inner membrane that drives transmembrane transport and the ATP synthase. The cytochrome b-c1 complex catalyzes electron transfer from ubiquinol to cytochrome c, linking this redox reaction to translocation of protons across the mitochondrial inner membrane, with protons being carried across the membrane as hydrogens on the quinol. In the process called Q cycle, 2 protons are consumed from the matrix, 4 protons are released into the intermembrane space and 2 electrons are passed to cytochrome c. This chain is Cytochrome b-c1 complex subunit 8, found in Solanum tuberosum (Potato).